The primary structure comprises 180 residues: Ribosome maturation factor RimM (180 aa).

One can recognise a PRC barrel domain in the interval Pro-108–Phe-180.

Belongs to the RimM family. In terms of assembly, binds ribosomal protein uS19.

The protein localises to the cytoplasm. Functionally, an accessory protein needed during the final step in the assembly of 30S ribosomal subunit, possibly for assembly of the head region. Essential for efficient processing of 16S rRNA. May be needed both before and after RbfA during the maturation of 16S rRNA. It has affinity for free ribosomal 30S subunits but not for 70S ribosomes. In Xanthomonas euvesicatoria pv. vesicatoria (strain 85-10) (Xanthomonas campestris pv. vesicatoria), this protein is Ribosome maturation factor RimM.